The primary structure comprises 610 residues: Myoneurin (610 aa).

The BTB domain occupies Cys24 to Ser89. The tract at residues Ser156–Tyr199 is disordered. Positions Ala171–Ala185 are enriched in basic residues. 2 short sequence motifs (nuclear localization signal) span residues Lys174–Lys190 and Lys257–Lys262. 8 C2H2-type zinc fingers span residues Pro302–His324, Tyr330–His352, Tyr358–His381, Tyr387–His409, Tyr415–His437, Tyr443–His465, Tyr471–His493, and Phe499–His522. Residues Thr519 to Pro548 are disordered. Over residues Ser523–Ser539 the composition is skewed to basic and acidic residues.

It belongs to the krueppel C2H2-type zinc-finger protein family. Mainly expressed in the neuromuscular system. Located in and around synaptic myonuclei in adult muscle. Expression is dysregulated after nerve injury. Also found in the cerebellum, testis, heart, brain and liver.

It is found in the nucleus. This Mus musculus (Mouse) protein is Myoneurin (Mynn).